The primary structure comprises 185 residues: Probable chorismate pyruvate-lyase 1 (185 aa).

R70, L108, and E166 together coordinate substrate.

This sequence belongs to the UbiC family.

It is found in the cytoplasm. The enzyme catalyses chorismate = 4-hydroxybenzoate + pyruvate. It participates in cofactor biosynthesis; ubiquinone biosynthesis. In terms of biological role, removes the pyruvyl group from chorismate, with concomitant aromatization of the ring, to provide 4-hydroxybenzoate (4HB) for the ubiquinone pathway. In Pseudomonas fluorescens (strain Pf0-1), this protein is Probable chorismate pyruvate-lyase 1.